The following is a 249-amino-acid chain: 5'-nucleotidase SurE (249 aa).

D8, D9, S39, and N91 together coordinate a divalent metal cation.

Belongs to the SurE nucleotidase family. The cofactor is a divalent metal cation.

It localises to the cytoplasm. The enzyme catalyses a ribonucleoside 5'-phosphate + H2O = a ribonucleoside + phosphate. Functionally, nucleotidase that shows phosphatase activity on nucleoside 5'-monophosphates. The protein is 5'-nucleotidase SurE of Azotobacter vinelandii (strain DJ / ATCC BAA-1303).